A 41-amino-acid polypeptide reads, in one-letter code: MKVRSSLKSLKGRHRDCKMVRRKGVIYIINKTDPRFKAKQG.

This sequence belongs to the bacterial ribosomal protein bL36 family.

This chain is Large ribosomal subunit protein bL36, found in Caulobacter vibrioides (strain ATCC 19089 / CIP 103742 / CB 15) (Caulobacter crescentus).